Reading from the N-terminus, the 817-residue chain is Two pore calcium channel protein 1 (817 aa).

The Cytoplasmic segment spans residues 1–113 (MAVSLDDDVP…VHNHFFYMME (113 aa)). Residues 20–65 (SAPLPPSNSLGQEQLPSKNGGSHSIHNSQVPSLVSGADSPPSSPTG) form a disordered region. Residues 26–51 (SNSLGQEQLPSKNGGSHSIHNSQVPS) show a composition bias toward polar residues. The helical transmembrane segment at 114–134 (LLTALLLLLLSLCESPAVPVL) threads the bilayer. The Extracellular segment spans residues 135-137 (KLH). Residues 138 to 158 (TYVHATLELFALMVVVFELCM) traverse the membrane as a helical segment. Residues 159 to 172 (KLRWLGFHTFVRHK) are Cytoplasmic-facing. Residues 173–193 (RTMVKTSVLVVQFIEAIVVLV) form a helical membrane-spanning segment. Residues 194–202 (RQTSHVRVT) lie on the Extracellular side of the membrane. Residues 203-221 (RALRCIFLVDCRYCGGVRR) form a helical membrane-spanning segment. At 222–235 (NLRQIFQSLPPFMD) the chain is on the cytoplasmic side. Residues 236–256 (ILLLLLFFMIIFAILGFYLFS) form a helical membrane-spanning segment. Residues 257 to 263 (TNPSDPY) lie on the Extracellular side of the membrane. Positions 264-287 (FSTLENSIVNLFVLLTTANFPDVM) form an intramembrane region, helical; Pore-forming. The Extracellular portion of the chain corresponds to 288–298 (MPSYSRNPWSC). The helical transmembrane segment at 299–319 (VFFIVYLSIELYFIMNLLLAV) threads the bilayer. The Cytoplasmic portion of the chain corresponds to 320-445 (VFDTFNDIEK…NILVNSKAFQ (126 aa)). A helical membrane pass occupies residues 446-466 (YFMYLVVAVNGVWILVETFML). Topologically, residues 467 to 480 (KGGNFTSKHVPWSY) are extracellular. N-linked (GlcNAc...) asparagine glycosylation is present at N470. Residues 481–501 (LVFLTIYGVELFMKVAGLGPV) form a helical membrane-spanning segment. Residues 502 to 504 (EYL) are Cytoplasmic-facing. A helical transmembrane segment spans residues 505 to 527 (SSGWNLFDFSVTAFAFLGLLALT). Over 528–535 (LNMEPFYF) the chain is Extracellular. The chain crosses the membrane as a helical span at residues 536 to 550 (IVVLRPLQLLRLFKL). The Cytoplasmic segment spans residues 551–569 (KKRYRNVLDTMFELLPRMA). The helical transmembrane segment at 570–590 (SLGLTLLTFYYSFAIVGMEFF) threads the bilayer. Residues 591–630 (NGRLTPNCCNTSTVADAYRFINHTVGNKTKVEEGYYYLNN) are Extracellular-facing. The helical; Pore-forming intramembrane region spans 631 to 654 (FDNILNSFVTLFELTVVNNWYIIM). Topologically, residues 655-671 (EGVTSQTSHWSRLYFMT) are extracellular. The chain crosses the membrane as a helical span at residues 672-692 (FYIVTMVVMTIIVAFILEAFV). Over 693-817 (FRMNYSRKSQ…GSRQRSQTVT (125 aa)) the chain is Cytoplasmic. Positions 770 to 794 (SLKMYQEEIQEWYEEHAREQEQQKL) form a coiled coil. The disordered stretch occupies residues 785-817 (HAREQEQQKLRGSVPGPAAQQPPGSRQRSQTVT). Over residues 806–817 (PPGSRQRSQTVT) the composition is skewed to polar residues.

Belongs to the calcium channel alpha-1 subunit (TC 1.A.1.11) family. Two pore calcium channel subfamily. As to quaternary structure, dimer. Interacts with MTOR; the interaction is required for TPCN1 ATP sensitivity. Interacts with STX7, STX8 and STX12. Interacts with JPT2. Found in a complex with LSM12, TPCN1 and TPCN2. In terms of processing, N-glycosylated. In terms of tissue distribution, mainly expressed in epithelial tissues like lung, kidney, colon, spleen and liver (at protein level).

The protein resides in the lysosome membrane. It localises to the endosome membrane. Its subcellular location is the early endosome membrane. The protein localises to the recycling endosome membrane. It carries out the reaction Na(+)(in) = Na(+)(out). It catalyses the reaction Ca(2+)(in) = Ca(2+)(out). With respect to regulation, na(+) current is inhibited by ATP in a MTORC-dependent manner. ATP sensitivity is independent of PI(3,5)P2. Probably regulated by Mg(2+) ions, cytosolic Mg(2+) selectively inhibits outward current while lysosomal Mg(2+) modestly inhibits both the outward and inward currents. In the absence of Mg(2+), NAADP readily activates TPCN2, with properties similar to PI(3,5)P2. Both current elicited by PI(3,5)P2 as well as NAADP are inhibited by tetrandrine. Functionally, intracellular channel initially characterized as a non-selective Ca(2+)-permeable channel activated by NAADP (nicotinic acid adenine dinucleotide phosphate), it is also a voltage-gated highly-selective Na(+) channel activated directly by PI(3,5)P2 (phosphatidylinositol 3,5-bisphosphate) that senses pH changes and confers electrical excitability to organelles. Localizes to the early and recycling endosomes membranes where it plays a role in the uptake and processing of proteins and regulates organellar membrane excitability, membrane trafficking and pH homeostasis. Ion selectivity is not fixed but rather agonist-dependent and under defined ionic conditions, can be readily activated by both NAADP and PI(3,5)P2. Required for mTOR-dependent nutrient sensing. The sequence is that of Two pore calcium channel protein 1 from Mus musculus (Mouse).